The following is a 198-amino-acid chain: Probable GTP-binding protein EngB (198 aa).

The EngB-type G domain occupies 22–195 (DLPEIALAGR…WKAIHKMTKT (174 aa)). Residues 30–37 (GRSNVGKS), 57–61 (GKTQT), 75–78 (DVPG), 142–145 (TKAD), and 174–176 (FSS) each bind GTP. Mg(2+)-binding residues include serine 37 and threonine 59.

The protein belongs to the TRAFAC class TrmE-Era-EngA-EngB-Septin-like GTPase superfamily. EngB GTPase family. Mg(2+) serves as cofactor.

Necessary for normal cell division and for the maintenance of normal septation. The protein is Probable GTP-binding protein EngB of Bacillus mycoides (strain KBAB4) (Bacillus weihenstephanensis).